The chain runs to 84 residues: Acetylcholine receptor subunit alpha (84 aa).

Residues Cys-7 and Cys-21 are joined by a disulfide bond. N-linked (GlcNAc...) asparagine glycans are attached at residues Asn-20 and Asn-66. A disulfide bridge links Cys-71 with Cys-72.

It belongs to the ligand-gated ion channel (TC 1.A.9) family. Acetylcholine receptor (TC 1.A.9.1) subfamily. Alpha-1/CHRNA1 sub-subfamily. One of the alpha chains that assemble within the acetylcholine receptor, a pentamer of two alpha chains, a beta, a delta, and a gamma (in immature muscle) or epsilon (in mature muscle) chains. The muscle heteropentamer composed of alpha-1, beta-1, delta, epsilon subunits interacts with the alpha-conotoxin ImII.

It localises to the postsynaptic cell membrane. It is found in the cell membrane. The catalysed reaction is K(+)(in) = K(+)(out). The enzyme catalyses Na(+)(in) = Na(+)(out). Upon acetylcholine binding, the AChR responds by an extensive change in conformation that affects all subunits and leads to opening of an ion-conducting channel across the plasma membrane. The sequence is that of Acetylcholine receptor subunit alpha (CHRNA1) from Herpestes ichneumon (Egyptian mongoose).